We begin with the raw amino-acid sequence, 226 residues long: Ribonuclease 3 (226 aa).

The RNase III domain maps to 6–128 (INRLQRKLGY…LIGGVFLDSD (123 aa)). Residue glutamate 41 participates in Mg(2+) binding. Residue aspartate 45 is part of the active site. Residues aspartate 114 and glutamate 117 each coordinate Mg(2+). Glutamate 117 is a catalytic residue. Residues 155–225 (DPKTRLQEFL…AEQALIKLEL (71 aa)) form the DRBM domain.

This sequence belongs to the ribonuclease III family. In terms of assembly, homodimer. Requires Mg(2+) as cofactor.

It is found in the cytoplasm. The catalysed reaction is Endonucleolytic cleavage to 5'-phosphomonoester.. In terms of biological role, digests double-stranded RNA. Involved in the processing of primary rRNA transcript to yield the immediate precursors to the large and small rRNAs (23S and 16S). Processes some mRNAs, and tRNAs when they are encoded in the rRNA operon. Processes pre-crRNA and tracrRNA of type II CRISPR loci if present in the organism. In Serratia proteamaculans (strain 568), this protein is Ribonuclease 3.